The following is a 333-amino-acid chain: Putative ketol-acid reductoisomerase 2 (333 aa).

A KARI N-terminal Rossmann domain is found at 1 to 182 (MDKTVLDANL…AIPGGIAVIS (182 aa)). In terms of domain architecture, KARI C-terminal knotted spans 183 to 329 (SFEEEALLDL…KELYKLLGRK (147 aa)).

Belongs to the ketol-acid reductoisomerase family.

The catalysed reaction is (2R)-2,3-dihydroxy-3-methylbutanoate + NADP(+) = (2S)-2-acetolactate + NADPH + H(+). The enzyme catalyses (2R,3R)-2,3-dihydroxy-3-methylpentanoate + NADP(+) = (S)-2-ethyl-2-hydroxy-3-oxobutanoate + NADPH + H(+). The protein operates within amino-acid biosynthesis; L-isoleucine biosynthesis; L-isoleucine from 2-oxobutanoate: step 2/4. It functions in the pathway amino-acid biosynthesis; L-valine biosynthesis; L-valine from pyruvate: step 2/4. The polypeptide is Putative ketol-acid reductoisomerase 2 (ilvC2) (Saccharolobus solfataricus (strain ATCC 35092 / DSM 1617 / JCM 11322 / P2) (Sulfolobus solfataricus)).